Here is a 1576-residue protein sequence, read N- to C-terminus: Disco-interacting protein 2 homolog B (1576 aa).

Residues serine 9, serine 50, and serine 53 each carry the phosphoserine modification. The DMAP1-binding domain occupies 12–131; it reads AVAALPPEVR…PMPTKRRSTF (120 aa). Positions 31 to 167 are disordered; that stretch reads LSEGDITQKG…AALSAALQQS (137 aa). A compositionally biased stretch (polar residues) spans 52-62; it reads YSPQTQETDSA. A compositionally biased stretch (low complexity) spans 70–83; sequence QTPAPSAAQTSAPS. Phosphothreonine is present on threonine 71. The segment covering 92–104 has biased composition (basic and acidic residues); it reads GARDERYRSDIHT. Residue serine 100 is modified to Phosphoserine. Threonine 140 bears the Phosphothreonine mark. Phosphoserine is present on residues serine 146, serine 148, and serine 153. Positions 155–167 are enriched in low complexity; it reads RRQAALSAALQQS. A phosphoserine mark is found at serine 178, serine 193, and serine 203. Residues 179 to 201 form a disordered region; the sequence is IQGSSTSSSASSTLSHGEVKGTS. Positions 182 to 193 are enriched in low complexity; that stretch reads SSTSSSASSTLS. A disordered region spans residues 217–246; the sequence is SAPPDVTTTTSSSSSSSSIRPANIDLPPSG. Residues 223-234 show a composition bias toward low complexity; sequence TTTTSSSSSSSS. The residue at position 259 (serine 259) is a Phosphoserine.

This sequence belongs to the DIP2 family. As to quaternary structure, interacts with alpha-tubulin. As to expression, moderately expressed in adult brain, placenta, skeletal muscle, heart, kidney, pancreas, lung, spleen and colon. Expression was weaker in adult liver, kidney, spleen, and ovary, and in fetal brain and liver. In the brain, it is expressed in the cerebral cortex; the frontal, parietal, occipital and temporal lobes; the paracentral gyrus; the pons; the corpus callosum and the hippocampus. Highest expression levels in the brain were found in the cerebral cortex and the frontal and parietal lobes.

It localises to the cell projection. Its subcellular location is the dendrite. It is found in the axon. The protein localises to the perikaryon. In terms of biological role, negatively regulates axonal outgrowth and is essential for normal synaptic transmission. Not required for regulation of axon polarity. Promotes acetylation of alpha-tubulin. This Homo sapiens (Human) protein is Disco-interacting protein 2 homolog B (DIP2B).